A 24-amino-acid polypeptide reads, in one-letter code: Poly-His-poly-Gly peptide 1 (24 aa).

A compositionally biased stretch (basic residues) spans 1-13 (EDDHHHHHHHHHG). Residues 1–24 (EDDHHHHHHHHHGVGGGGGGGGGG) are disordered. Over residues 14–24 (VGGGGGGGGGG) the composition is skewed to gly residues.

As to expression, expressed by the venom gland.

The protein resides in the secreted. Its function is as follows. May serve as a metalloproteinase inhibitor during glandular storage. Their inhibition may be instantly disengaged, by dilution or physiochemical change, when venom is injected into tissue of the victim. This chain is Poly-His-poly-Gly peptide 1, found in Atheris chlorechis (Western bush viper).